The sequence spans 65 residues: Transcriptional regulatory protein SenS (65 aa).

Positions 11 to 31 (RFRKRKTYGNQILPLELLIEK) form a DNA-binding region, H-T-H motif.

The protein to B.natto SenN.

Its function is as follows. Regulates the expression of extracellular-protein genes of Bacillus subtilis. The chain is Transcriptional regulatory protein SenS (senS) from Bacillus subtilis (strain 168).